An 84-amino-acid chain; its full sequence is Small ribosomal subunit protein bS18 (84 aa).

The protein belongs to the bacterial ribosomal protein bS18 family. In terms of assembly, part of the 30S ribosomal subunit. Forms a tight heterodimer with protein bS6.

Binds as a heterodimer with protein bS6 to the central domain of the 16S rRNA, where it helps stabilize the platform of the 30S subunit. The protein is Small ribosomal subunit protein bS18 of Clostridium kluyveri (strain NBRC 12016).